A 449-amino-acid chain; its full sequence is Na(+)/H(+) antiporter NhaA 1 (449 aa).

A run of 11 helical transmembrane segments spans residues 32–52, 87–107, 114–134, 145–165, 174–194, 202–222, 233–253, 318–338, 347–367, 382–402, and 417–437; these read IEAT…TLSN, GLMT…VVLG, MVAF…GLYL, GWGV…ALLG, VFLL…VAVG, TALA…LLGV, AIIW…GVIL, WVAF…SITI, LAVM…FAWL, WGGL…ALFI, and LGIL…LCMF.

This sequence belongs to the NhaA Na(+)/H(+) (TC 2.A.33) antiporter family.

The protein resides in the cell inner membrane. The enzyme catalyses Na(+)(in) + 2 H(+)(out) = Na(+)(out) + 2 H(+)(in). Functionally, na(+)/H(+) antiporter that extrudes sodium in exchange for external protons. The protein is Na(+)/H(+) antiporter NhaA 1 of Acidiphilium cryptum (strain JF-5).